Reading from the N-terminus, the 951-residue chain is Bifunctional glutamine synthetase adenylyltransferase/adenylyl-removing enzyme (951 aa).

The interval 1-440 (MLPLPSELQI…VFDDLIGDET (440 aa)) is adenylyl removase. An adenylyl transferase region spans residues 449–951 (HGLYKSLWQD…WLAANDANVS (503 aa)).

The protein belongs to the GlnE family. Requires Mg(2+) as cofactor.

The enzyme catalyses [glutamine synthetase]-O(4)-(5'-adenylyl)-L-tyrosine + phosphate = [glutamine synthetase]-L-tyrosine + ADP. It carries out the reaction [glutamine synthetase]-L-tyrosine + ATP = [glutamine synthetase]-O(4)-(5'-adenylyl)-L-tyrosine + diphosphate. Its function is as follows. Involved in the regulation of glutamine synthetase GlnA, a key enzyme in the process to assimilate ammonia. When cellular nitrogen levels are high, the C-terminal adenylyl transferase (AT) inactivates GlnA by covalent transfer of an adenylyl group from ATP to specific tyrosine residue of GlnA, thus reducing its activity. Conversely, when nitrogen levels are low, the N-terminal adenylyl removase (AR) activates GlnA by removing the adenylyl group by phosphorolysis, increasing its activity. The regulatory region of GlnE binds the signal transduction protein PII (GlnB) which indicates the nitrogen status of the cell. This chain is Bifunctional glutamine synthetase adenylyltransferase/adenylyl-removing enzyme, found in Yersinia pseudotuberculosis serotype O:1b (strain IP 31758).